We begin with the raw amino-acid sequence, 169 residues long: Crossover junction endodeoxyribonuclease RuvC (169 aa).

Residues aspartate 11, glutamate 71, and histidine 143 contribute to the active site. Residues aspartate 11, glutamate 71, and histidine 143 each contribute to the Mg(2+) site.

Belongs to the RuvC family. In terms of assembly, homodimer which binds Holliday junction (HJ) DNA. The HJ becomes 2-fold symmetrical on binding to RuvC with unstacked arms; it has a different conformation from HJ DNA in complex with RuvA. In the full resolvosome a probable DNA-RuvA(4)-RuvB(12)-RuvC(2) complex forms which resolves the HJ. Mg(2+) is required as a cofactor.

It is found in the cytoplasm. The enzyme catalyses Endonucleolytic cleavage at a junction such as a reciprocal single-stranded crossover between two homologous DNA duplexes (Holliday junction).. The RuvA-RuvB-RuvC complex processes Holliday junction (HJ) DNA during genetic recombination and DNA repair. Endonuclease that resolves HJ intermediates. Cleaves cruciform DNA by making single-stranded nicks across the HJ at symmetrical positions within the homologous arms, yielding a 5'-phosphate and a 3'-hydroxyl group; requires a central core of homology in the junction. The consensus cleavage sequence is 5'-(A/T)TT(C/G)-3'. Cleavage occurs on the 3'-side of the TT dinucleotide at the point of strand exchange. HJ branch migration catalyzed by RuvA-RuvB allows RuvC to scan DNA until it finds its consensus sequence, where it cleaves and resolves the cruciform DNA. This chain is Crossover junction endodeoxyribonuclease RuvC, found in Mesorhizobium japonicum (strain LMG 29417 / CECT 9101 / MAFF 303099) (Mesorhizobium loti (strain MAFF 303099)).